The chain runs to 117 residues: Large ribosomal subunit protein bL20 (117 aa).

It belongs to the bacterial ribosomal protein bL20 family.

In terms of biological role, binds directly to 23S ribosomal RNA and is necessary for the in vitro assembly process of the 50S ribosomal subunit. It is not involved in the protein synthesizing functions of that subunit. This is Large ribosomal subunit protein bL20 from Mesomycoplasma hyopneumoniae (strain 7448) (Mycoplasma hyopneumoniae).